We begin with the raw amino-acid sequence, 747 residues long: Endoglucanase C (747 aa).

The signal sequence occupies residues 1–37 (MGHVTSPSKRYPASFKRAGSILGVSIALAAFSNVAAA). Residues 38–136 (GCEYVVTNSW…TVNGAACTGG (99 aa)) form the CBM2 domain. Cystine bridges form between Cys39-Cys133, Cys183-Cys214, and Cys193-Cys208. Residues 182–211 (QCNWYGTLYPLCVSTTSGWGYENNRSCISP) form the CBM10 domain. Residues 226–283 (GSSSPSSISSSSVRSSSSSSVVPPSSSSSSSVPSSSSSSVSSSSVVSSSSSSVSVPGT) are disordered. The span at 227–281 (SSSPSSISSSSVRSSSSSSVVPPSSSSSSSVPSSSSSSVSSSSVVSSSSSSVSVP) shows a compositional bias: low complexity. A catalytic region spans residues 280 to 747 (VPGTGVFRVN…TQLLHNMWGL (468 aa)). Glu502 (proton donor) is an active-site residue. The active-site Nucleophile is Glu652.

The protein belongs to the glycosyl hydrolase 5 (cellulase A) family.

The catalysed reaction is Endohydrolysis of (1-&gt;4)-beta-D-glucosidic linkages in cellulose, lichenin and cereal beta-D-glucans.. This is Endoglucanase C (celC) from Cellvibrio japonicus (strain Ueda107) (Pseudomonas fluorescens subsp. cellulosa).